We begin with the raw amino-acid sequence, 348 residues long: Pheromone P-factor receptor (348 aa).

7 helical membrane-spanning segments follow: residues 46–69 (LLTGMTLSAQLALGVLTILMVCLL), 79–103 (VFVFNSASIVAMCLRAILNIVTICS), 125–141 (VFNILILLLAPVIIFTA), 162–180 (IMTVISACLTVLVLAFWIT), 207–225 (YFIAKILFAFSIIFHSGVF), 249–267 (CILVISCQCLIVPATFTII), and 283–301 (CLLIISLPLSSLWASSTAL).

The protein belongs to the G-protein coupled receptor 4 family.

It is found in the membrane. Receptor for the peptide pheromone P-factor, a mating factor of S.pombe. Pheromone signaling is essential for initiation of meiosis in S.pombe; P-factor signaling alone may be sufficient. The protein is Pheromone P-factor receptor (mam2) of Schizosaccharomyces pombe (strain 972 / ATCC 24843) (Fission yeast).